Consider the following 94-residue polypeptide: Putative FXYD domain-containing ion transport regulator 8 (94 aa).

Positions M1–A18 are cleaved as a signal peptide. Over S19 to Q34 the chain is Extracellular. A helical membrane pass occupies residues T35 to H58. The Cytoplasmic segment spans residues R59–N94. The disordered stretch occupies residues Q66–N94.

It belongs to the FXYD family.

It localises to the membrane. This Homo sapiens (Human) protein is Putative FXYD domain-containing ion transport regulator 8 (FXYD6P3).